Consider the following 194-residue polypeptide: Casparian strip membrane protein 2 (194 aa).

Residues 1-32 are Cytoplasmic-facing; that stretch reads MSTTIDIPESSKVVKGKGVVAAPLRPGGWKKG. A helical transmembrane segment spans residues 33 to 53; that stretch reads VAIMDFILRLGAIAAALGAAA. The Extracellular portion of the chain corresponds to 54-82; sequence TMGTSDQTLPFFTQFFQFEASYDSFTTFQ. A helical membrane pass occupies residues 83–103; it reads FFVITMALVGGYLVLSLPFSV. Residues 104 to 115 are Cytoplasmic-facing; the sequence is VAIIRPHAVGPR. The chain crosses the membrane as a helical span at residues 116–136; the sequence is LFLIILDTVFLTLATASAASA. Residues 137–168 are Extracellular-facing; sequence AAVVYLAHNGDQDTNWLAICNQFGDFCAQTSS. The chain crosses the membrane as a helical span at residues 169-189; that stretch reads AVVSSFVAVVVFVLLIVMSAL. Residues 190–194 lie on the Cytoplasmic side of the membrane; the sequence is AMGKP.

This sequence belongs to the Casparian strip membrane proteins (CASP) family. Homodimer and heterodimers.

The protein localises to the cell membrane. In terms of biological role, regulates membrane-cell wall junctions and localized cell wall deposition. Required for establishment of the Casparian strip membrane domain (CSD) and the subsequent formation of Casparian strips, a cell wall modification of the root endodermis that determines an apoplastic barrier between the intraorganismal apoplasm and the extraorganismal apoplasm and prevents lateral diffusion. The chain is Casparian strip membrane protein 2 from Vigna unguiculata (Cowpea).